The primary structure comprises 255 residues: NAD kinase (255 aa).

Aspartate 44 serves as the catalytic Proton acceptor. NAD(+) contacts are provided by residues 44 to 45, histidine 49, 114 to 115, aspartate 144, alanine 152, 155 to 160, and glutamine 216; these read DG, NE, and SAYNLS.

This sequence belongs to the NAD kinase family. A divalent metal cation is required as a cofactor.

Its subcellular location is the cytoplasm. It catalyses the reaction NAD(+) + ATP = ADP + NADP(+) + H(+). In terms of biological role, involved in the regulation of the intracellular balance of NAD and NADP, and is a key enzyme in the biosynthesis of NADP. Catalyzes specifically the phosphorylation on 2'-hydroxyl of the adenosine moiety of NAD to yield NADP. This Rickettsia felis (strain ATCC VR-1525 / URRWXCal2) (Rickettsia azadi) protein is NAD kinase.